The primary structure comprises 722 residues: Polyribonucleotide nucleotidyltransferase (722 aa).

Residues D487 and D493 each coordinate Mg(2+). One can recognise a KH domain in the interval 554 to 613 (PRMVSFKIHPDKIREVIGKGGATIQALTKETGCSIDIKDDGTVTIASTSAEGMAEAKARI). In terms of domain architecture, S1 motif spans 623 to 691 (GKIYEGPVVK…ERGRLRLSLK (69 aa)).

It belongs to the polyribonucleotide nucleotidyltransferase family. It depends on Mg(2+) as a cofactor.

It localises to the cytoplasm. The catalysed reaction is RNA(n+1) + phosphate = RNA(n) + a ribonucleoside 5'-diphosphate. Its function is as follows. Involved in mRNA degradation. Catalyzes the phosphorolysis of single-stranded polyribonucleotides processively in the 3'- to 5'-direction. This Polynucleobacter necessarius subsp. necessarius (strain STIR1) protein is Polyribonucleotide nucleotidyltransferase.